The following is a 440-amino-acid chain: Collagen alpha-1(XXVI) chain (440 aa).

An N-terminal signal peptide occupies residues 1–20 (MKLVLLLPWACCCLCGSALA). In terms of domain architecture, EMI spans 52–128 (RRHWCHHTVT…PGFTGSNCEE (77 aa)). 3 cysteine pairs are disulfide-bonded: cysteine 56-cysteine 118, cysteine 83-cysteine 89, and cysteine 117-cysteine 126. An N-linked (GlcNAc...) asparagine glycan is attached at asparagine 70. Residue asparagine 132 is glycosylated (N-linked (GlcNAc...) asparagine). 2 disordered regions span residues 157-362 (EQPS…EGEG) and 390-440 (LASP…GDRK). Positions 199–267 (GPAGPPGQMG…PGPAGSPGLL (69 aa)) constitute a Collagen-like 1 domain. Composition is skewed to pro residues over residues 200-215 (PAGP…PAGP), 231-243 (VGPP…PGPR), and 252-261 (PGPPGPPGPA). The segment covering 269-281 (NTPQGVLYSLQTP) has biased composition (polar residues). In terms of domain architecture, Collagen-like 2 spans 302 to 334 (GIPGPRGPPGPPGPPGPHGPPGPPGAPGSQGLV). Residues 306–327 (PRGPPGPPGPPGPHGPPGPPGA) are compositionally biased toward pro residues. Positions 347–356 (SVKEEEDKAS) are enriched in basic and acidic residues.

As to quaternary structure, homotrimer or heterotrimer. Post-translationally, hydroxylated on proline residues. N-glycosylated. Specifically expressed in the testis and ovary in adult tissues.

It is found in the secreted. The protein localises to the extracellular space. It localises to the extracellular matrix. The sequence is that of Collagen alpha-1(XXVI) chain (Col26a1) from Mus musculus (Mouse).